The following is a 979-amino-acid chain: Translation initiation factor IF-2 (979 aa).

The segment covering 50–77 (LKRSHGQSDDSARKKITLTKRETSEIRQ) has biased composition (basic and acidic residues). Positions 50–385 (LKRSHGQSDD…GKHNADDARS (336 aa)) are disordered. Over residues 78–87 (SDSTGKTRTV) the composition is skewed to polar residues. Basic and acidic residues-rich tracts occupy residues 98 to 109 (IKRDDVESHGDG), 121 to 142 (EEVRRDEEQRREQAEALARQEA), and 149 to 173 (EAAEREEAERRAKQEALEAEQRRQA). Positions 174 to 192 (ELLAQKAAEEAAAAQAAAD) are enriched in low complexity. Basic and acidic residues-rich tracts occupy residues 196–211 (ETAREKAEEDKARLAT), 219–263 (NADD…EAEA), and 280–291 (PSERKAEEKKAE). The span at 317 to 327 (APAATTTTAAA) shows a compositional bias: low complexity. Residues 351 to 368 (GGGLKTRGDSSGGVGGWR) are compositionally biased toward gly residues. The tr-type G domain maps to 479–646 (PRPPVVTVMG…NVLLQAEVLE (168 aa)). Positions 488–495 (GHVDHGKT) are G1. Residue 488–495 (GHVDHGKT) participates in GTP binding. The segment at 513 to 517 (GITQH) is G2. Residues 534–537 (DTPG) are G3. GTP-binding positions include 534–538 (DTPGH) and 588–591 (TKVD). Residues 588–591 (TKVD) are G4. Positions 624-626 (SAK) are G5.

Belongs to the TRAFAC class translation factor GTPase superfamily. Classic translation factor GTPase family. IF-2 subfamily.

The protein resides in the cytoplasm. Its function is as follows. One of the essential components for the initiation of protein synthesis. Protects formylmethionyl-tRNA from spontaneous hydrolysis and promotes its binding to the 30S ribosomal subunits. Also involved in the hydrolysis of GTP during the formation of the 70S ribosomal complex. The protein is Translation initiation factor IF-2 of Cupriavidus metallidurans (strain ATCC 43123 / DSM 2839 / NBRC 102507 / CH34) (Ralstonia metallidurans).